Consider the following 406-residue polypeptide: MEDTAKYLIHADFVVDGVVERSDVVGAAFGQTEGLLGDDLAIPDLQDSAKLGRIDVSVDSEGGQSFGDITIASSLDRVETATLAAALEAVERIGPCRADVEVDRIEDVRAAKRREVVDRAKELLATAFDEGAINADDILDEVRESVRVDDITDYDGYPAGPNVDSSDAVVIVEGRADVVTLLKYGIKNAVAVEGTNIPDAIAALSREKTATAFLDGDRGGDMILRELGQVGSLDFVARAPMGECVEDLSRRTVDSALRNKTPASAAAPIATTQSETAATDGSATPAPTPEPAPDTAPSPDSDGDDTEAAAPPTLAEHARAVADTETARLLDDALARIREVPAAEVVDAVADADSVPAVVVVDATITQRLLDVAAQRGVASLIGADTDEFVKQPLATRVRTLDDART.

Residues 167 to 253 (DAVVIVEGRA…CVEDLSRRTV (87 aa)) form the Toprim domain. Glu-173, Asp-215, and Asp-217 together coordinate Mg(2+). The disordered stretch occupies residues 259 to 309 (NKTPASAAAPIATTQSETAATDGSATPAPTPEPAPDTAPSPDSDGDDTEAA). Positions 261 to 272 (TPASAAAPIATT) are enriched in low complexity. Over residues 286-296 (APTPEPAPDTA) the composition is skewed to pro residues.

Belongs to the archaeal DnaG primase family. As to quaternary structure, forms a ternary complex with MCM helicase and DNA. Requires Mg(2+) as cofactor.

The enzyme catalyses ssDNA + n NTP = ssDNA/pppN(pN)n-1 hybrid + (n-1) diphosphate.. Functionally, RNA polymerase that catalyzes the synthesis of short RNA molecules used as primers for DNA polymerase during DNA replication. This Halobacterium salinarum (strain ATCC 29341 / DSM 671 / R1) protein is DNA primase DnaG.